Reading from the N-terminus, the 227-residue chain is Ureidoacrylate amidohydrolase RutB (227 aa).

The active-site Proton acceptor is the D22. The active site involves K131. The active-site Nucleophile is the C164.

This sequence belongs to the isochorismatase family. RutB subfamily.

The catalysed reaction is (Z)-3-ureidoacrylate + H2O + H(+) = (Z)-3-aminoacrylate + NH4(+) + CO2. It carries out the reaction (Z)-3-ureidoacrylate + H2O = (Z)-3-aminoacrylate + carbamate + H(+). It catalyses the reaction (Z)-2-methylureidoacrylate + H2O + H(+) = (Z)-2-methylaminoacrylate + NH4(+) + CO2. Hydrolyzes ureidoacrylate to form aminoacrylate and carbamate. The carbamate hydrolyzes spontaneously, thereby releasing one of the nitrogen atoms of the pyrimidine ring as ammonia and one of its carbon atoms as CO2. In Azorhizobium caulinodans (strain ATCC 43989 / DSM 5975 / JCM 20966 / LMG 6465 / NBRC 14845 / NCIMB 13405 / ORS 571), this protein is Ureidoacrylate amidohydrolase RutB.